Consider the following 627-residue polypeptide: 1-deoxy-D-xylulose-5-phosphate synthase (627 aa).

Thiamine diphosphate contacts are provided by residues H87 and G128–S130. A Mg(2+)-binding site is contributed by D159. Thiamine diphosphate-binding positions include G160–A161, N188, F295, and E375. Residue N188 participates in Mg(2+) binding.

Belongs to the transketolase family. DXPS subfamily. As to quaternary structure, homodimer. The cofactor is Mg(2+). Thiamine diphosphate is required as a cofactor.

It catalyses the reaction D-glyceraldehyde 3-phosphate + pyruvate + H(+) = 1-deoxy-D-xylulose 5-phosphate + CO2. It participates in metabolic intermediate biosynthesis; 1-deoxy-D-xylulose 5-phosphate biosynthesis; 1-deoxy-D-xylulose 5-phosphate from D-glyceraldehyde 3-phosphate and pyruvate: step 1/1. Functionally, catalyzes the acyloin condensation reaction between C atoms 2 and 3 of pyruvate and glyceraldehyde 3-phosphate to yield 1-deoxy-D-xylulose-5-phosphate (DXP). The sequence is that of 1-deoxy-D-xylulose-5-phosphate synthase from Pseudomonas aeruginosa (strain LESB58).